The sequence spans 444 residues: Tol-Pal system protein TolB (444 aa).

The first 19 residues, 1–19 (MRNIIYFILSLLFSVTSYA), serve as a signal peptide directing secretion.

This sequence belongs to the TolB family. In terms of assembly, the Tol-Pal system is composed of five core proteins: the inner membrane proteins TolA, TolQ and TolR, the periplasmic protein TolB and the outer membrane protein Pal. They form a network linking the inner and outer membranes and the peptidoglycan layer.

Its subcellular location is the periplasm. In terms of biological role, part of the Tol-Pal system, which plays a role in outer membrane invagination during cell division and is important for maintaining outer membrane integrity. The polypeptide is Tol-Pal system protein TolB (Rickettsia peacockii (strain Rustic)).